We begin with the raw amino-acid sequence, 277 residues long: Urease accessory protein UreD (277 aa).

The protein belongs to the UreD family. UreD, UreF and UreG form a complex that acts as a GTP-hydrolysis-dependent molecular chaperone, activating the urease apoprotein by helping to assemble the nickel containing metallocenter of UreC. The UreE protein probably delivers the nickel.

Its subcellular location is the cytoplasm. Its function is as follows. Required for maturation of urease via the functional incorporation of the urease nickel metallocenter. This Yersinia pestis (strain Pestoides F) protein is Urease accessory protein UreD.